An 84-amino-acid chain; its full sequence is Small ribosomal subunit protein uS17 (84 aa).

The protein belongs to the universal ribosomal protein uS17 family. In terms of assembly, part of the 30S ribosomal subunit.

One of the primary rRNA binding proteins, it binds specifically to the 5'-end of 16S ribosomal RNA. The polypeptide is Small ribosomal subunit protein uS17 (Alkaliphilus oremlandii (strain OhILAs) (Clostridium oremlandii (strain OhILAs))).